We begin with the raw amino-acid sequence, 324 residues long: Aldo-keto reductase family 1 member A1-A (324 aa).

Residues glycine 10–glycine 19, threonine 20, tryptophan 21, and aspartate 44 contribute to the NADP(+) site. Residue tyrosine 49 is the Proton donor of the active site. The NADP(+) site is built by serine 161, asparagine 162, serine 210, leucine 212, serine 214, lysine 262, serine 263, valine 264, threonine 265, arginine 268, glutamine 271, and asparagine 272.

This sequence belongs to the aldo/keto reductase family.

The protein localises to the cytoplasm. Its subcellular location is the cytosol. It localises to the apical cell membrane. It catalyses the reaction a primary alcohol + NADP(+) = an aldehyde + NADPH + H(+). The enzyme catalyses S-nitroso-CoA + NADPH + H(+) = sulfinamide-CoA + NADP(+). It carries out the reaction S-nitrosoglutathione + NADPH + H(+) = S-(hydroxysulfenamide)glutathione + NADP(+). In terms of biological role, catalyzes the NADPH-dependent reduction of a wide variety of carbonyl-containing compounds to their corresponding alcohols. Displays enzymatic activity towards endogenous metabolites such as aromatic and aliphatic aldehydes, ketones, monosaccharides and bile acids. Acts as an aldehyde-detoxification enzyme. Also acts as an inhibitor of protein S-nitrosylation by mediating degradation of S-nitroso-coenzyme A (S-nitroso-CoA), a cofactor required to S-nitrosylate proteins. Also acts as a S-nitroso-glutathione reductase by catalyzing the NADPH-dependent reduction of S-nitrosoglutathione. Displays no reductase activity towards retinoids. The sequence is that of Aldo-keto reductase family 1 member A1-A (akr1a1a) from Danio rerio (Zebrafish).